The chain runs to 57 residues: MLKWALIFFVISIIAGFFGFSGVSAATATIARVLFGIALVIFLIFLVLALMAGQAVL.

The next 2 helical transmembrane spans lie at 4–24 and 33–53; these read WALIFFVISIIAGFFGFSGVS and VLFGIALVIFLIFLVLALMAG.

Belongs to the UPF0391 family.

It is found in the cell membrane. The protein is UPF0391 membrane protein RHECIAT_CH0003936 of Rhizobium etli (strain CIAT 652).